The primary structure comprises 761 residues: Protein transport protein SEC23 C (761 aa).

Residues Cys60, Cys63, Cys82, and Cys85 each contribute to the Zn(2+) site. The tract at residues 60–85 (CRTCRSVLNPYSVVDFSACNWGCPFC) is zinc finger-like.

This sequence belongs to the SEC23/SEC24 family. SEC24 subfamily. In terms of assembly, component of the coat protein complex II (COPII), composed of at least five proteins: the Sec23/24 complex, the Sec13/31 complex and Sar1.

It localises to the cytoplasmic vesicle. The protein resides in the COPII-coated vesicle membrane. It is found in the endoplasmic reticulum membrane. Its subcellular location is the membrane. Its function is as follows. Component of the coat protein complex II (COPII) which promotes the formation of transport vesicles from the endoplasmic reticulum (ER). The coat has two main functions, the physical deformation of the endoplasmic reticulum membrane into vesicles and the selection of cargo molecules. This Arabidopsis thaliana (Mouse-ear cress) protein is Protein transport protein SEC23 C.